Here is a 94-residue protein sequence, read N- to C-terminus: Protein translocase subunit SecE (94 aa).

The disordered stretch occupies residues 1–32 (MTDAVGSIDMPDAQDEAPDSKKSRKGGKRGKK). Residues 22-32 (KSRKGGKRGKK) show a composition bias toward basic residues. A helical transmembrane segment spans residues 65–85 (TVVIIFVVIMIGLVTLIDYGF).

The protein belongs to the SecE/SEC61-gamma family. As to quaternary structure, component of the Sec protein translocase complex. Heterotrimer consisting of SecY, SecE and SecG subunits. The heterotrimers can form oligomers, although 1 heterotrimer is thought to be able to translocate proteins. Interacts with the ribosome. Interacts with SecDF, and other proteins may be involved. Interacts with SecA.

It localises to the cell membrane. In terms of biological role, essential subunit of the Sec protein translocation channel SecYEG. Clamps together the 2 halves of SecY. May contact the channel plug during translocation. The protein is Protein translocase subunit SecE of Streptomyces lividans.